A 97-amino-acid chain; its full sequence is uncharacterized protein (97 aa).

The segment covering 1-20 has biased composition (basic and acidic residues); the sequence is MAKEQTDRTTLDLFAHERRP. The tract at residues 1–30 is disordered; sequence MAKEQTDRTTLDLFAHERRPGRPKTNPLSR.

This is an uncharacterized protein from Escherichia coli O157:H7.